Consider the following 294-residue polypeptide: ATP synthase gamma chain (294 aa).

Belongs to the ATPase gamma chain family. F-type ATPases have 2 components, CF(1) - the catalytic core - and CF(0) - the membrane proton channel. CF(1) has five subunits: alpha(3), beta(3), gamma(1), delta(1), epsilon(1). CF(0) has three main subunits: a, b and c.

The protein localises to the cell inner membrane. Produces ATP from ADP in the presence of a proton gradient across the membrane. The gamma chain is believed to be important in regulating ATPase activity and the flow of protons through the CF(0) complex. The polypeptide is ATP synthase gamma chain (Campylobacter jejuni subsp. jejuni serotype O:6 (strain 81116 / NCTC 11828)).